The chain runs to 34 residues: Photosystem I reaction center subunit XII (34 aa).

A helical transmembrane segment spans residues 10–32 (IYIALVVAAHAAILALRLSVSLY).

This sequence belongs to the PsaM family.

The protein resides in the cellular thylakoid membrane. This chain is Photosystem I reaction center subunit XII, found in Synechococcus sp. (strain RCC307).